The primary structure comprises 478 residues: Glutamate-1-semialdehyde 2,1-aminomutase, chloroplastic (478 aa).

Residues 1–40 constitute a chloroplast transit peptide; the sequence is MAGAAAASAAAAAVASGISARPVAPRPSPSRARAPRSVVR. A disordered region spans residues 15–36; sequence ASGISARPVAPRPSPSRARAPR. Lys-318 is subject to N6-(pyridoxal phosphate)lysine.

It belongs to the class-III pyridoxal-phosphate-dependent aminotransferase family. HemL subfamily. In terms of assembly, homodimer. It depends on pyridoxal 5'-phosphate as a cofactor.

It is found in the plastid. The protein localises to the chloroplast. It carries out the reaction (S)-4-amino-5-oxopentanoate = 5-aminolevulinate. Its pathway is porphyrin-containing compound metabolism; protoporphyrin-IX biosynthesis; 5-aminolevulinate from L-glutamyl-tRNA(Glu): step 2/2. It functions in the pathway porphyrin-containing compound metabolism; chlorophyll biosynthesis. The polypeptide is Glutamate-1-semialdehyde 2,1-aminomutase, chloroplastic (GSA) (Oryza sativa subsp. japonica (Rice)).